Reading from the N-terminus, the 397-residue chain is Phosphoglycerate kinase (397 aa).

Residues 21 to 23 (DMN), R36, 59 to 62 (HLGR), R114, and R147 contribute to the substrate site. Residues K198, E320, and 346-349 (GGDT) contribute to the ATP site.

This sequence belongs to the phosphoglycerate kinase family. As to quaternary structure, monomer.

Its subcellular location is the cytoplasm. It catalyses the reaction (2R)-3-phosphoglycerate + ATP = (2R)-3-phospho-glyceroyl phosphate + ADP. The protein operates within carbohydrate degradation; glycolysis; pyruvate from D-glyceraldehyde 3-phosphate: step 2/5. The protein is Phosphoglycerate kinase of Neisseria gonorrhoeae (strain NCCP11945).